The sequence spans 300 residues: Tubulin polyglutamylase complex subunit 2 (300 aa).

Residues 257–300 are disordered; it reads KIVIPKKKGPVQPAGGQKGPSGPSGPSTSSTSKSSSGSGNPTRK. Positions 276–300 are enriched in low complexity; the sequence is PSGPSGPSTSSTSKSSSGSGNPTRK.

In terms of assembly, part of the neuronal tubulin polyglutamylase complex which contains TPGS1, TPGS2, TTLL1, LRRC49 and NICN1. Interacts with CSTPP1 and LRRC49.

It is found in the cytoplasm. Its subcellular location is the cytoskeleton. It localises to the microtubule organizing center. The protein localises to the centrosome. The protein resides in the centriolar satellite. In terms of biological role, subunit of the tubulin polyglutamylase complex (TPGC). The complex mediates cilia and flagella polyglutamylation which is essential for their biogenesis and motility. The polypeptide is Tubulin polyglutamylase complex subunit 2 (TPGS2) (Homo sapiens (Human)).